Consider the following 1010-residue polypeptide: Sodium/potassium-transporting ATPase subunit alpha-3 (1010 aa).

The disordered stretch occupies residues 1 to 21 (MGDKGEKESPKKGKGKRDLDD). The Cytoplasmic segment spans residues 1-74 (MGDKGEKESP…NALTPPPTTP (74 aa)). The interaction with phosphoinositide-3 kinase stretch occupies residues 69 to 71 (PPP). The helical transmembrane segment at 75 to 95 (EWVKFCRQLFGGFSILLWIGA) threads the bilayer. Topologically, residues 96–118 (ILCFLAYGIQAGTEDEPSNDNLY) are extracellular. Residues 119 to 139 (LGIVLAAVVIITGCFSYYQEA) form a helical membrane-spanning segment. The Cytoplasmic portion of the chain corresponds to 140-275 (KSSKIMESFK…VGKTPIAVEI (136 aa)). The helical transmembrane segment at 276–295 (EHFIQLITGVAVFLGISFFV) threads the bilayer. Residues 296 to 307 (LSLILGYTWLEA) are Extracellular-facing. Residues 308-325 (VIFLIGIIVANVPEGLLA) form a helical membrane-spanning segment. At 326–759 (TVTVCLTLTA…EEGRLIFDNL (434 aa)) the chain is on the cytoplasmic side. The active-site 4-aspartylphosphate intermediate is the aspartate 363. Mg(2+) is bound by residues aspartate 704 and aspartate 708. A helical transmembrane segment spans residues 760–779 (KKSIAYTLTSNIPEITPFLL). The Extracellular segment spans residues 780 to 789 (FIMANIPLPL). A helical transmembrane segment spans residues 790–810 (GTITILCIDLGTDMVPAISLA). The Cytoplasmic portion of the chain corresponds to 811–830 (YEAAESDIMKRQPRNPRSDK). The helical transmembrane segment at 831 to 853 (LVNERLISMAYGQIGMIQALGGF) threads the bilayer. The Extracellular portion of the chain corresponds to 854 to 905 (FSYFVILAENGFLPSCLVGIRLSWDDRTINDLEDSYGQQWTYEQRKVVEFTC). A helical membrane pass occupies residues 906-925 (HTAFFVSIVVVQWADLIICK). Residues 926–938 (TRRNSVFQQGMKN) are Cytoplasmic-facing. Serine 930 bears the Phosphoserine; by PKA mark. The chain crosses the membrane as a helical span at residues 939 to 957 (KILIFGLFEETALAAFLSY). Over 958-972 (CPGMDVALRMYPLKP) the chain is Extracellular. A helical transmembrane segment spans residues 973 to 993 (SWWFCAFPYSFLIFVYDEIRK). Over 994-1010 (LILRRNPGGWVEKETYY) the chain is Cytoplasmic.

This sequence belongs to the cation transport ATPase (P-type) (TC 3.A.3) family. Type IIC subfamily. The sodium/potassium-transporting ATPase is composed of a catalytic alpha subunit, an auxiliary non-catalytic beta subunit and an additional regulatory subunit.

It is found in the cell membrane. It carries out the reaction K(+)(out) + Na(+)(in) + ATP + H2O = K(+)(in) + Na(+)(out) + ADP + phosphate + H(+). Functionally, this is the catalytic component of the active enzyme, which catalyzes the hydrolysis of ATP coupled with the exchange of sodium and potassium ions across the plasma membrane. This action creates the electrochemical gradient of sodium and potassium ions, providing the energy for active transport of various nutrients. The protein is Sodium/potassium-transporting ATPase subunit alpha-3 (ATP1A3) of Gallus gallus (Chicken).